We begin with the raw amino-acid sequence, 249 residues long: Globin-like protein 9 (249 aa).

The interval 20-43 (TNKGPNGLARRGTQRGCSRSKSTR) is disordered. The Globin domain occupies 52–205 (SLTFSQKQAL…LIDELRGGFE (154 aa)). Residues His116 and His148 each coordinate heme.

Belongs to the globin family.

This chain is Globin-like protein 9 (glb-9), found in Caenorhabditis elegans.